A 464-amino-acid chain; its full sequence is Phospho-cellobiase (464 aa).

Glu-172 (proton donor) is an active-site residue. The active-site Nucleophile is the Glu-361.

Belongs to the glycosyl hydrolase 1 family.

The sequence is that of Phospho-cellobiase (casB) from Klebsiella oxytoca.